Here is a 140-residue protein sequence, read N- to C-terminus: ISDra2 transposase TnpA (140 aa).

Positions 67 and 69 each coordinate Mg(2+). The mobile alpha helix stretch occupies residues 127-133 (AQIQKYI). Tyr132 serves as the catalytic Nucleophile. Gln136 is a Mg(2+) binding site.

It belongs to the transposase 17 family. As to quaternary structure, homodimer. The cofactor is Mg(2+).

Both the excision and insertion steps are inhibited by TnpB. Functionally, a transposase that is part of insertion sequence (IS) element ISDra2, it is necessary and sufficient for both transposon excision and insertion of ISDra2. This protein alone can be provided in trans and allows transposition of an empty IS element (tnpA or tnpA-tnpB replaced by a selectable marker). ISDra2 binds subterminal imperfect palindromes at the left (LE) and right (RE) ends of the element and cleaves only the 'top strand' which is circularized and subsequently reinserted into the DNA target. This is called a 'peel and paste' mechanism and increases the copy number of the IS. Transposition is linked to DNA replication in the absence of irradiation, with maximal activity when the 'top strand' is on the replication lagging strand, and occurs preferentially on the lagging strand. The IS element inserts 3' of the target sequence 5'-TTGAT-3'; target duplication has not been observed. This Deinococcus radiodurans (strain ATCC 13939 / DSM 20539 / JCM 16871 / CCUG 27074 / LMG 4051 / NBRC 15346 / NCIMB 9279 / VKM B-1422 / R1) protein is ISDra2 transposase TnpA.